The primary structure comprises 377 residues: Ipis-1 (377 aa).

N-linked (GlcNAc...) asparagine glycosylation is found at Asn11 and Asn226.

It belongs to the serpin family. Female salivary gland. Not detected in midgut and other tissues.

It localises to the secreted. Functionally, salivary protein with immunosuppressive properties that can modulate blood feeding of ticks on vertebrate species. Inhibits proliferation of bovine peripheral blood mononuclear cells (PBMCs). Inhibits IFN-gamma (IFNG) production by bovine PBMCs. In Ixodes persulcatus (Taiga tick), this protein is Ipis-1.